Here is a 397-residue protein sequence, read N- to C-terminus: MLKFEHVTKTYKGGKKAVNDLTLNIDKGEFVCFIGPSGCGKTTTMKMINRLIEPTEGKIFINDKDIMAEDPVKLRRSIGYVIQQIGLMPHMTIRENIVLVPKLLKWSEEKKQERAKELIKLVDLPEEFLDRYPYELSGGQQQRIGVLRALAAEQNLILMDEPFGALDPITRDSLQEEFKNLQKELGKTIIFVTHDMDEAIKLADRIVIMKDGEIVQFDTPDEILRNPANSFVEDFIGKDRLIEAKPDVTQVAQIMNTNPVSITADKSLQAAITVMKEKRVDTLLVVDEGNVLKGFIDVEQIDLNRRTATSVMDIIEKNVFYVYEDTLLRDTVQRILKRGYKYIPVVDKDKRLVGIVTRASLVDIVYDSIWGTLEDATENQEEQADSKTTEPEMKQEG.

An ABC transporter domain is found at 2 to 236; the sequence is LKFEHVTKTY…PANSFVEDFI (235 aa). 35-42 lines the ATP pocket; that stretch reads GPSGCGKT. 2 CBS domains span residues 255–311 and 315–373; these read MNTN…ATSV and IEKN…WGTL. The interval 377–397 is disordered; sequence TENQEEQADSKTTEPEMKQEG. Over residues 384–397 the composition is skewed to basic and acidic residues; the sequence is ADSKTTEPEMKQEG.

The protein belongs to the ABC transporter superfamily. In terms of assembly, the complex is composed of two ATP-binding proteins (OpuCA), two transmembrane proteins (OpuCB and OpuCD) and a solute-binding protein (OpuCC).

The enzyme catalyses a quaternary ammonium(out) + ATP + H2O = a quaternary ammonium(in) + ADP + phosphate + H(+). Functionally, part of the ABC transporter complex OpuCABCD involved in carnitine uptake. Probably responsible for energy coupling to the transport system. Involved, with BetL and GbuABC, in osmoprotection and cryoprotection of Listeria. Can also mediate weak glycine betaine transport. This chain is Carnitine transport ATP-binding protein OpuCA (opuCA), found in Listeria monocytogenes serotype 1/2a (strain 10403S).